Reading from the N-terminus, the 92-residue chain is Small ribosomal subunit protein uS19c (92 aa).

This sequence belongs to the universal ribosomal protein uS19 family.

It is found in the plastid. It localises to the chloroplast. In terms of biological role, protein S19 forms a complex with S13 that binds strongly to the 16S ribosomal RNA. In Marchantia polymorpha (Common liverwort), this protein is Small ribosomal subunit protein uS19c (rps19).